We begin with the raw amino-acid sequence, 97 residues long: Large ribosomal subunit protein bL27 (97 aa).

The segment at 14-36 is disordered; the sequence is HKKGGGSTSNGRDSQAKRLGAKA.

The protein belongs to the bacterial ribosomal protein bL27 family.

The sequence is that of Large ribosomal subunit protein bL27 from Streptococcus sanguinis (strain SK36).